Reading from the N-terminus, the 238-residue chain is uncharacterized protein (238 aa).

It belongs to the HyuE racemase family.

This is an uncharacterized protein from Schizosaccharomyces pombe (strain 972 / ATCC 24843) (Fission yeast).